A 759-amino-acid polypeptide reads, in one-letter code: Zinc finger protein 287 (759 aa).

The region spanning 42-124 (RRNFRNFPYP…ALVEDLTQIL (83 aa)) is the SCAN box domain. The disordered stretch occupies residues 127–154 (EEAPQSSALPQDTPEDDPNHDPNPASQA). Residues 166 to 234 (VTFNDVAVDI…IKEIVEGPNP (69 aa)) form the KRAB domain. 14 consecutive C2H2-type zinc fingers follow at residues 366–388 (YSCNVCGKQFRKYPSLLAHRENH), 394–416 (YECEECGKEFKHLSSLIAHQRMH), 422–444 (YECHQCGKAFSQRAHLTIHQRIH), 450–472 (YKCEDCGKDFSQRAHLTIHQRTH), 478–500 (YKCLECSKTFSHSSSLINHQRVH), 506–528 (YICNECGKTFSQSTHLLQHQKIH), 534–556 (YKCNECWKVFSQSTYLIRHQRIH), 562–584 (YKCTACGKAFAHSSTLIQHQTTH), 590–612 (YICNVCGKAFSQSANLTQHHRTH), 618–640 (YKCSVCGKAFSQSVHLTQHQRIH), 646–668 (FKCNTCGKAYRQGANLTQHQRVH), 674–696 (YKCHHCGKAFIYSSSLNQHRRTH), 702–724 (YKCSHCNKDFSQRTCLIQHQRIH), and 730–752 (YGCRICGKAFTQSTNLIQHQRVH).

The protein belongs to the krueppel C2H2-type zinc-finger protein family. In terms of tissue distribution, expressed in brain and at low levels in kidney and spleen and few hematopoietic cell lines.

It is found in the nucleus. Its function is as follows. May be involved in transcriptional regulation. This chain is Zinc finger protein 287, found in Mus musculus (Mouse).